The primary structure comprises 460 residues: ATP synthase subunit beta 1 (460 aa).

149 to 156 (GGAGVGKT) provides a ligand contact to ATP.

The protein belongs to the ATPase alpha/beta chains family. In terms of assembly, F-type ATPases have 2 components, CF(1) - the catalytic core - and CF(0) - the membrane proton channel. CF(1) has five subunits: alpha(3), beta(3), gamma(1), delta(1), epsilon(1). CF(0) has three main subunits: a(1), b(2) and c(9-12). The alpha and beta chains form an alternating ring which encloses part of the gamma chain. CF(1) is attached to CF(0) by a central stalk formed by the gamma and epsilon chains, while a peripheral stalk is formed by the delta and b chains.

It is found in the cell inner membrane. The enzyme catalyses ATP + H2O + 4 H(+)(in) = ADP + phosphate + 5 H(+)(out). Its function is as follows. Produces ATP from ADP in the presence of a proton gradient across the membrane. The catalytic sites are hosted primarily by the beta subunits. This chain is ATP synthase subunit beta 1, found in Nitrosomonas eutropha (strain DSM 101675 / C91 / Nm57).